A 136-amino-acid polypeptide reads, in one-letter code: MAQRRSSQTTKKVKRKNVTNGVAHIHSTHNNTIVTFSDEKGNVISWASSGTIGYKGTKKKTAYAAGLAAQNASEKAKEHGIREVSVRVKGIGQGRDAARKQIEVSGISVSQIVDVTPQAHNGTRPPKRVLKREKAR.

Disordered stretches follow at residues 1–20 (MAQR…NVTN) and 115–136 (VTPQ…EKAR). Basic residues predominate over residues 125 to 136 (PPKRVLKREKAR).

Belongs to the universal ribosomal protein uS11 family. Part of the 30S ribosomal subunit. Interacts with proteins S7 and S18. Binds to IF-3.

In terms of biological role, located on the platform of the 30S subunit, it bridges several disparate RNA helices of the 16S rRNA. Forms part of the Shine-Dalgarno cleft in the 70S ribosome. The protein is Small ribosomal subunit protein uS11 of Mycoplasmopsis pulmonis (strain UAB CTIP) (Mycoplasma pulmonis).